The primary structure comprises 448 residues: Trigger factor (448 aa).

A PPIase FKBP-type domain is found at 163 to 248; it reads GDIVVIDFDG…VKDIRVPKAA (86 aa).

It belongs to the FKBP-type PPIase family. Tig subfamily.

It is found in the cytoplasm. The catalysed reaction is [protein]-peptidylproline (omega=180) = [protein]-peptidylproline (omega=0). In terms of biological role, involved in protein export. Acts as a chaperone by maintaining the newly synthesized protein in an open conformation. Functions as a peptidyl-prolyl cis-trans isomerase. The sequence is that of Trigger factor from Rhodospirillum centenum (strain ATCC 51521 / SW).